The primary structure comprises 213 residues: Orotate phosphoribosyltransferase (213 aa).

Position 26 (Lys26) interacts with 5-phospho-alpha-D-ribose 1-diphosphate. 34–35 (FF) is an orotate binding site. Residues 72–73 (YK), Arg99, Lys100, Lys103, His105, and 124–132 (DDVITAGTA) contribute to the 5-phospho-alpha-D-ribose 1-diphosphate site. Orotate is bound by residues Thr128 and Arg156.

It belongs to the purine/pyrimidine phosphoribosyltransferase family. PyrE subfamily. In terms of assembly, homodimer. Mg(2+) serves as cofactor.

It carries out the reaction orotidine 5'-phosphate + diphosphate = orotate + 5-phospho-alpha-D-ribose 1-diphosphate. It functions in the pathway pyrimidine metabolism; UMP biosynthesis via de novo pathway; UMP from orotate: step 1/2. Catalyzes the transfer of a ribosyl phosphate group from 5-phosphoribose 1-diphosphate to orotate, leading to the formation of orotidine monophosphate (OMP). The chain is Orotate phosphoribosyltransferase from Escherichia coli O127:H6 (strain E2348/69 / EPEC).